Here is a 98-residue protein sequence, read N- to C-terminus: UPF0473 protein LSL_1108 (98 aa).

This sequence belongs to the UPF0473 family.

This Ligilactobacillus salivarius (strain UCC118) (Lactobacillus salivarius) protein is UPF0473 protein LSL_1108.